Here is a 351-residue protein sequence, read N- to C-terminus: Formyl peptide receptor 2 (351 aa).

Residues 1-29 (MESNYSIHLNGSEVVVYDSTISRVLWILS) are Extracellular-facing. 2 N-linked (GlcNAc...) asparagine glycosylation sites follow: asparagine 4 and asparagine 10. The chain crosses the membrane as a helical span at residues 30-50 (MVVVSITFFLGVLGNGLVIWV). Over 51 to 61 (AGFRMPHTVTT) the chain is Cytoplasmic. The chain crosses the membrane as a helical span at residues 62-82 (IWYLNLALADFSFTATLPFLL). The Extracellular segment spans residues 83-99 (VEMAMKEKWPFGWFLCK). A disulfide bridge connects residues cysteine 98 and cysteine 176. The chain crosses the membrane as a helical span at residues 100–120 (LVHIVVDVNLFGSVFLIALIA). Residues 121-144 (LDRCICVLHPVWAQNHRTVSLARK) are Cytoplasmic-facing. The helical transmembrane segment at 145–165 (VVVGPWIFALILTLPIFIFLT) threads the bilayer. The Extracellular segment spans residues 166 to 205 (TVRIPGGDVYCTFNFGSWAQTDEEKLNTAITFVTTRGIIR). The chain crosses the membrane as a helical span at residues 206-226 (FLIGFSMPMSIVAVCYGLIAV). Over 227–241 (KINRRNLVNSSRPLR) the chain is Cytoplasmic. A helical membrane pass occupies residues 242–262 (VLTAVVASFFICWFPFQLVAL). Residues 263–282 (LGTVWFKETLLSGSYKILDM) are Extracellular-facing. Residues 283 to 305 (FVNPTSSLAYFNSCLNPMLYVFM) form a helical membrane-spanning segment. Residues 306-351 (GQDFRERFIHSLPYSLERALSEDSGQTSDSSTSSTSPPADIELKAP) are Cytoplasmic-facing. A disordered region spans residues 325–351 (LSEDSGQTSDSSTSSTSPPADIELKAP). The span at 327–341 (EDSGQTSDSSTSSTS) shows a compositional bias: low complexity.

This sequence belongs to the G-protein coupled receptor 1 family. In terms of assembly, interacts with Amyloid-beta protein 42, product of APP; the interaction takes place at the cell surface and the complex is then rapidly internalized. In terms of tissue distribution, primarily expressed in neutrophils. Not detected in vomeronasal neurons.

Its subcellular location is the cell membrane. High affinity receptor for N-formyl-methionyl peptides (FMLP), which are powerful neutrophil chemotactic factors. Stimulates chemotaxis in immune cells to site of infection or tissue damage upon recognition of several ligands, such as FMLP, or ligand involved in cell damage, disease or inflammation. Receptor for the chemokine-like protein FAM19A5, mediating FAM19A5-stimulated macrophage chemotaxis and the inhibitory effect on TNFSF11/RANKL-induced osteoclast differentiation. This Mus musculus (Mouse) protein is Formyl peptide receptor 2 (Fpr2).